The chain runs to 269 residues: Ribosomal RNA small subunit methyltransferase A (269 aa).

Positions 18, 20, 45, 66, 91, and 112 each coordinate S-adenosyl-L-methionine.

The protein belongs to the class I-like SAM-binding methyltransferase superfamily. rRNA adenine N(6)-methyltransferase family. RsmA subfamily.

Its subcellular location is the cytoplasm. The catalysed reaction is adenosine(1518)/adenosine(1519) in 16S rRNA + 4 S-adenosyl-L-methionine = N(6)-dimethyladenosine(1518)/N(6)-dimethyladenosine(1519) in 16S rRNA + 4 S-adenosyl-L-homocysteine + 4 H(+). In terms of biological role, specifically dimethylates two adjacent adenosines (A1518 and A1519) in the loop of a conserved hairpin near the 3'-end of 16S rRNA in the 30S particle. May play a critical role in biogenesis of 30S subunits. This is Ribosomal RNA small subunit methyltransferase A from Shewanella loihica (strain ATCC BAA-1088 / PV-4).